A 192-amino-acid polypeptide reads, in one-letter code: dITP/XTP pyrophosphatase (192 aa).

7 to 12 (SNNKNK) serves as a coordination point for substrate. The Proton acceptor role is filled by aspartate 68. Mg(2+) is bound at residue aspartate 68. Substrate contacts are provided by residues threonine 69, 148 to 151 (FGYD), lysine 171, and 176 to 177 (HR).

Belongs to the HAM1 NTPase family. As to quaternary structure, homodimer. Requires Mg(2+) as cofactor.

The catalysed reaction is XTP + H2O = XMP + diphosphate + H(+). It catalyses the reaction dITP + H2O = dIMP + diphosphate + H(+). It carries out the reaction ITP + H2O = IMP + diphosphate + H(+). Its function is as follows. Pyrophosphatase that catalyzes the hydrolysis of nucleoside triphosphates to their monophosphate derivatives, with a high preference for the non-canonical purine nucleotides XTP (xanthosine triphosphate), dITP (deoxyinosine triphosphate) and ITP. Seems to function as a house-cleaning enzyme that removes non-canonical purine nucleotides from the nucleotide pool, thus preventing their incorporation into DNA/RNA and avoiding chromosomal lesions. The protein is dITP/XTP pyrophosphatase of Flavobacterium johnsoniae (strain ATCC 17061 / DSM 2064 / JCM 8514 / BCRC 14874 / CCUG 350202 / NBRC 14942 / NCIMB 11054 / UW101) (Cytophaga johnsonae).